We begin with the raw amino-acid sequence, 254 residues long: Cyclin homolog (254 aa).

It belongs to the cyclin family. Cyclin D subfamily.

Its function is as follows. May be highly relevant to the process of cellular transformation and rapid T-cell proliferation effected by HVS during latent infections of T-cells in susceptible hosts. This chain is Cyclin homolog (72), found in Saimiriine herpesvirus 2 (strain 11) (SaHV-2).